The following is a 1156-amino-acid chain: Nuclear pore-associated protein 1 (1156 aa).

8 disordered regions span residues 1–60 (MGNL…RRPS), 155–204 (EGPR…FRCS), 219–266 (NSMS…PEPA), 481–515 (GGSY…TRES), 680–703 (TLVN…MHTT), 732–786 (NTQP…KTSL), 872–915 (STSF…SSFI), and 1026–1046 (APGP…SGTP). Basic residues predominate over residues 50-59 (LFRRNARRRP). Over residues 156 to 165 (GPRRVKKDED) the composition is skewed to basic and acidic residues. Polar residues-rich tracts occupy residues 179 to 197 (PLSS…TQGD) and 219 to 231 (NSMS…SPAS). Composition is skewed to polar residues over residues 680 to 692 (TLVN…SSSK), 732 to 750 (NTQP…SLPA), 884 to 915 (TTTS…SSFI), and 1028 to 1046 (GPSS…SGTP).

In terms of assembly, associates with the nuclear pore complex (NPC). As to expression, testis-specific in adults. In fetal brain expressed only from the paternal allele.

The protein resides in the nucleus. It is found in the nucleoplasm. It localises to the nucleus inner membrane. May be involved in spermatogenesis. The sequence is that of Nuclear pore-associated protein 1 (NPAP1) from Homo sapiens (Human).